We begin with the raw amino-acid sequence, 213 residues long: Ribonuclease HII (213 aa).

One can recognise an RNase H type-2 domain in the interval 1-206 (MICGVDEAGK…VSTLLAKKTQ (206 aa)). Residues Asp6, Glu7, and Asp101 each coordinate a divalent metal cation.

The protein belongs to the RNase HII family. It depends on Mn(2+) as a cofactor. Mg(2+) is required as a cofactor.

The protein resides in the cytoplasm. It carries out the reaction Endonucleolytic cleavage to 5'-phosphomonoester.. Endonuclease that specifically degrades the RNA of RNA-DNA hybrids. The polypeptide is Ribonuclease HII (Methanoregula boonei (strain DSM 21154 / JCM 14090 / 6A8)).